We begin with the raw amino-acid sequence, 480 residues long: Histone deacetylase 1 (480 aa).

A histone deacetylase region spans residues 9 to 321; the sequence is RKVCYYYDGD…WTYETAVALD (313 aa). Positions 27 and 31 each coordinate 1D-myo-inositol 1,4,5,6-tetrakisphosphate. The active site involves His-141. 3 residues coordinate Zn(2+): Asp-176, His-178, and Asp-264. Arg-270 is a binding site for 1D-myo-inositol 1,4,5,6-tetrakisphosphate. Positions 376 to 480 are disordered; sequence APGVQMQPIP…KGVKEETKST (105 aa). The span at 388–400 shows a compositional bias: acidic residues; the sequence is AVQEDSGDEEEED. The segment covering 401–416 has biased composition (basic and acidic residues); sequence PEKRISIRNSDKRISC. The span at 417–427 shows a compositional bias: acidic residues; sequence DEEFSDSEDEG. A compositionally biased stretch (basic and acidic residues) spans 455-480; it reads KDEKEEEKAKEEKAEPKGVKEETKST.

This sequence belongs to the histone deacetylase family. HD type 1 subfamily. Requires Zn(2+) as cofactor.

It localises to the nucleus. It carries out the reaction N(6)-acetyl-L-lysyl-[histone] + H2O = L-lysyl-[histone] + acetate. The catalysed reaction is N(6)-acetyl-L-lysyl-[protein] + H2O = L-lysyl-[protein] + acetate. It catalyses the reaction N(6)-(2E)-butenoyl-L-lysyl-[protein] + H2O = (2E)-2-butenoate + L-lysyl-[protein]. The enzyme catalyses N(6)-[(S)-lactoyl]-L-lysyl-[protein] + H2O = (S)-lactate + L-lysyl-[protein]. With respect to regulation, inositol tetraphosphate (1D-myo-inositol 1,4,5,6-tetrakisphosphate) may act as an intermolecular glue between HDAC1 and N-Cor repressor complex components. Its function is as follows. Histone deacetylase that catalyzes the deacetylation of lysine residues on the N-terminal part of the core histones (H2A, H2B, H3 and H4). Histone deacetylation gives a tag for epigenetic repression and plays an important role in transcriptional regulation, cell cycle progression and developmental events. Histone deacetylases act via the formation of large multiprotein complexes. Also functions as a deacetylase for non-histone proteins. In addition to protein deacetylase activity, also has protein-lysine deacylase activity: acts as a protein decrotonylase and delactylase by mediating decrotonylation ((2E)-butenoyl) and delactylation (lactoyl) of histones, respectively. The chain is Histone deacetylase 1 (HDAC1) from Gallus gallus (Chicken).